The chain runs to 609 residues: MSQAQIDTLTSLFDSAIAVLKNDGELPADWQNNSQITRTKDTSHGDFASNIALTAAKAAKANPRQVAEKIVNALPENQDIRQIEIAGPGFINVFLNTEAKFAVLDDIFNLQNGFGLSKQFDGQKIQVEFVSANPTSSLHVGHGRGAAFGMSVSNLLEAIGYDVTREYYVNDAGRQMDILATSTYLRYLETNGETVTFPVNGYQGDYVSDIAQTLKTQHADTYVHRFADIAENVPEDAQFEINADGEKVLLSGDKEAHIDGLIANSKALLGNGYELFLNAALSSILADIKDDLNDFGVSYECWFSERSIDSEIEPVLQILEDKGYLYEKDGNIWFKSTDFGDEKDRVVRRANGQSTYFASDIAYHKNKFDRGFDKVVNVWGADHHGYVPRVKAALLALGIDADRLDVVLVQFVALWRGDEKVQMSSRSGKFVTLRELRHEVGNDAARFYYVARKPEVHVDFDLELAKSQSKDNLVYYIQYAHARVCRVLEKLETSGLSVDDAIGAAQQELLVAPSEEELIKLLAAYPATLMRSATGYEPHILTNYLKELAALFHGWYDSNRILPVSLTSGETPSADEMAMMQARLRLSKAVRQVISNGLGLLGLSAPSSM.

The 'HIGH' region signature appears at 132–142; sequence ANPTSSLHVGH.

Belongs to the class-I aminoacyl-tRNA synthetase family. As to quaternary structure, monomer.

It localises to the cytoplasm. The enzyme catalyses tRNA(Arg) + L-arginine + ATP = L-arginyl-tRNA(Arg) + AMP + diphosphate. This is Arginine--tRNA ligase from Psychrobacter cryohalolentis (strain ATCC BAA-1226 / DSM 17306 / VKM B-2378 / K5).